A 231-amino-acid chain; its full sequence is Large ribosomal subunit protein uL1 (231 aa).

It belongs to the universal ribosomal protein uL1 family. In terms of assembly, part of the 50S ribosomal subunit.

Its function is as follows. Binds directly to 23S rRNA. The L1 stalk is quite mobile in the ribosome, and is involved in E site tRNA release. In terms of biological role, protein L1 is also a translational repressor protein, it controls the translation of the L11 operon by binding to its mRNA. In Mycoplasmopsis synoviae (strain 53) (Mycoplasma synoviae), this protein is Large ribosomal subunit protein uL1.